Reading from the N-terminus, the 327-residue chain is GMP reductase (327 aa).

Catalysis depends on Cys-176, which acts as the Thioimidate intermediate. 205 to 228 (IIADGGIRTHGDIAKSIRFGATMV) is an NADP(+) binding site.

It belongs to the IMPDH/GMPR family. GuaC type 2 subfamily.

The catalysed reaction is IMP + NH4(+) + NADP(+) = GMP + NADPH + 2 H(+). In terms of biological role, catalyzes the irreversible NADPH-dependent deamination of GMP to IMP. It functions in the conversion of nucleobase, nucleoside and nucleotide derivatives of G to A nucleotides, and in maintaining the intracellular balance of A and G nucleotides. This Streptococcus equi subsp. equi (strain 4047) protein is GMP reductase.